The sequence spans 104 residues: MLTVIAEIRTRPGQHHRQAVLDQFAKIVPTVLKEEGCHGYAPMVDCAAGVSFQSMAPDSIVMIEQWESIAHLEAHLQTPHMKAYSEAVKGDVLEMNIRILQPGI.

An ABM domain is found at 2 to 100 (LTVIAEIRTR…DVLEMNIRIL (99 aa)).

In terms of assembly, homodimer.

The catalysed reaction is menadiol + 2 O2 = menadione + 2 superoxide + 2 H(+). In terms of biological role, can oxidize menadiol to menadione. The polypeptide is Probable quinol monooxygenase YgiN (ygiN) (Escherichia coli O157:H7).